The primary structure comprises 278 residues: Expansin-B17 (278 aa).

An N-terminal signal peptide occupies residues 1–26 (MAAASSRSFSLCVLLLLLLLAPPISA). One can recognise an Expansin-like EG45 domain in the interval 66-176 (GGACGYGSLV…RRTACKYGGK (111 aa)). 3 disulfides stabilise this stretch: C69-C98, C101-C171, and C106-C112. The 82-residue stretch at 189 to 270 (FWLSLLVEFE…NWKPTATYTS (82 aa)) folds into the Expansin-like CBD domain.

It belongs to the expansin family. Expansin B subfamily.

Its subcellular location is the secreted. It is found in the cell wall. The protein resides in the membrane. Functionally, may cause loosening and extension of plant cell walls by disrupting non-covalent bonding between cellulose microfibrils and matrix glucans. No enzymatic activity has been found. May be required for rapid internodal elongation in deepwater rice during submergence. This chain is Expansin-B17 (EXPB17), found in Oryza sativa subsp. japonica (Rice).